The sequence spans 946 residues: Protein TMA108 (946 aa).

Position 2 is an N-acetylserine (Ser2). 293-297 is a substrate binding site; sequence MAMEN. His330 contributes to the Zn(2+) binding site. Glu331 serves as the catalytic Proton acceptor. Positions 334 and 353 each coordinate Zn(2+).

Belongs to the peptidase M1 family. Associates with ribosomal complexes. Zn(2+) is required as a cofactor.

Its subcellular location is the cytoplasm. Its function is as follows. Putative zinc aminopeptidase which may be involved in ribosome biogenesis. The chain is Protein TMA108 (TMA108) from Saccharomyces cerevisiae (strain ATCC 204508 / S288c) (Baker's yeast).